Reading from the N-terminus, the 500-residue chain is Aspartyl/glutamyl-tRNA(Asn/Gln) amidotransferase subunit B (500 aa).

It belongs to the GatB/GatE family. GatB subfamily. Heterotrimer of A, B and C subunits.

The catalysed reaction is L-glutamyl-tRNA(Gln) + L-glutamine + ATP + H2O = L-glutaminyl-tRNA(Gln) + L-glutamate + ADP + phosphate + H(+). It carries out the reaction L-aspartyl-tRNA(Asn) + L-glutamine + ATP + H2O = L-asparaginyl-tRNA(Asn) + L-glutamate + ADP + phosphate + 2 H(+). Allows the formation of correctly charged Asn-tRNA(Asn) or Gln-tRNA(Gln) through the transamidation of misacylated Asp-tRNA(Asn) or Glu-tRNA(Gln) in organisms which lack either or both of asparaginyl-tRNA or glutaminyl-tRNA synthetases. The reaction takes place in the presence of glutamine and ATP through an activated phospho-Asp-tRNA(Asn) or phospho-Glu-tRNA(Gln). The sequence is that of Aspartyl/glutamyl-tRNA(Asn/Gln) amidotransferase subunit B from Brucella ovis (strain ATCC 25840 / 63/290 / NCTC 10512).